The sequence spans 86 residues: Serine protease inhibitor Kazal-type 9 (86 aa).

Residues 1-19 (MRATAIVLLLALTLATMFS) form the signal peptide. The region spanning 26-86 (TKQMVDCSHY…TLKFVHFGKC (61 aa)) is the Kazal-like domain. 3 disulfide bridges follow: C32–C68, C46–C65, and C54–C86.

As to quaternary structure, dimer. Interacts with KLK5 and KLK8. Skin. Highly expressed at sites of hyperkeratosis. Also detected in thymus, tonsils, testis, pancreas, liver, placenta and brain. Expressed at stratum granulosum and stratum corneum at palmar and plantar sites (at protein level).

The protein resides in the secreted. Functionally, serine protease inhibitor which specifically inhibits KLK5. May contribute to the regulation of the desquamation process in skin by inhibiting KLK5. In Homo sapiens (Human), this protein is Serine protease inhibitor Kazal-type 9 (SPINK9).